We begin with the raw amino-acid sequence, 134 residues long: Holo-[acyl-carrier-protein] synthase (134 aa).

Mg(2+) contacts are provided by Asp-8 and Glu-57.

Belongs to the P-Pant transferase superfamily. AcpS family. Mg(2+) serves as cofactor.

It is found in the cytoplasm. It catalyses the reaction apo-[ACP] + CoA = holo-[ACP] + adenosine 3',5'-bisphosphate + H(+). Functionally, transfers the 4'-phosphopantetheine moiety from coenzyme A to a Ser of acyl-carrier-protein. The protein is Holo-[acyl-carrier-protein] synthase of Rhizobium etli (strain CIAT 652).